Consider the following 419-residue polypeptide: Zinc finger CCCH domain-containing protein 62 (419 aa).

The segment at 89–116 adopts a C3H1-type zinc-finger fold; sequence SLRKWVCKYWKDGKCKRGEQCQFLHSWS. WD repeat units follow at residues 129 to 168, 210 to 247, 256 to 293, 296 to 335, and 383 to 419; these read GHNK…CVHS, GVVG…ESDP, GHSG…CIMT, QHTG…KVVQ, and FSTH…GNKV.

This chain is Zinc finger CCCH domain-containing protein 62 (ZFWD4), found in Arabidopsis thaliana (Mouse-ear cress).